The primary structure comprises 272 residues: HMP-PP phosphatase (272 aa).

The active-site Nucleophile is the Asp-8. Mg(2+) is bound by residues Asp-8, Asp-10, and Asp-212.

The protein belongs to the HAD-like hydrolase superfamily. Cof family. It depends on Mg(2+) as a cofactor.

The enzyme catalyses 4-amino-2-methyl-5-(diphosphooxymethyl)pyrimidine + H2O = 4-amino-2-methyl-5-(phosphooxymethyl)pyrimidine + phosphate + H(+). In terms of biological role, catalyzes the hydrolysis of 4-amino-2-methyl-5-hydroxymethylpyrimidine pyrophosphate (HMP-PP) to 4-amino-2-methyl-5-hydroxymethylpyrimidine phosphate (HMP-P). In Escherichia coli (strain K12 / MC4100 / BW2952), this protein is HMP-PP phosphatase.